The chain runs to 89 residues: Putative septation protein SpoVG (89 aa).

It belongs to the SpoVG family.

Its function is as follows. Could be involved in septation. The sequence is that of Putative septation protein SpoVG from Heliobacterium modesticaldum (strain ATCC 51547 / Ice1).